The sequence spans 338 residues: Glyceraldehyde-3-phosphate dehydrogenase (338 aa).

Residues 12–13 (RI), aspartate 34, and arginine 80 each bind NAD(+). Residues 151–153 (SCT), threonine 182, 211–212 (TG), and arginine 234 each bind D-glyceraldehyde 3-phosphate. Cysteine 152 acts as the Nucleophile in catalysis. Position 316 (asparagine 316) interacts with NAD(+).

The protein belongs to the glyceraldehyde-3-phosphate dehydrogenase family. In terms of assembly, homotetramer.

It localises to the cytoplasm. The catalysed reaction is D-glyceraldehyde 3-phosphate + phosphate + NAD(+) = (2R)-3-phospho-glyceroyl phosphate + NADH + H(+). Its pathway is carbohydrate degradation; glycolysis; pyruvate from D-glyceraldehyde 3-phosphate: step 1/5. The chain is Glyceraldehyde-3-phosphate dehydrogenase (GPD) from Paracoccidioides lutzii (strain ATCC MYA-826 / Pb01) (Paracoccidioides brasiliensis).